Consider the following 278-residue polypeptide: Release factor glutamine methyltransferase (278 aa).

S-adenosyl-L-methionine is bound by residues 120-124 (GTGTG), aspartate 143, and asparagine 184. 184 to 187 (NPPY) lines the substrate pocket.

Belongs to the protein N5-glutamine methyltransferase family. PrmC subfamily.

It carries out the reaction L-glutaminyl-[peptide chain release factor] + S-adenosyl-L-methionine = N(5)-methyl-L-glutaminyl-[peptide chain release factor] + S-adenosyl-L-homocysteine + H(+). Its function is as follows. Methylates the class 1 translation termination release factors RF1/PrfA and RF2/PrfB on the glutamine residue of the universally conserved GGQ motif. This Deinococcus radiodurans (strain ATCC 13939 / DSM 20539 / JCM 16871 / CCUG 27074 / LMG 4051 / NBRC 15346 / NCIMB 9279 / VKM B-1422 / R1) protein is Release factor glutamine methyltransferase.